Consider the following 776-residue polypeptide: Methionine--tRNA ligase (776 aa).

Residues 10 to 20 (PYSNGPIHLGH) carry the 'HIGH' region motif. Zn(2+) is bound by residues C143, C146, C156, and C159. A 'KMSKS' region motif is present at residues 375 to 379 (KFSKS). Position 378 (K378) interacts with ATP. The 101-residue stretch at 676-776 (DFAKLDMRVG…KPISLGSKVR (101 aa)) folds into the tRNA-binding domain.

This sequence belongs to the class-I aminoacyl-tRNA synthetase family. MetG type 1 subfamily. As to quaternary structure, homodimer. The cofactor is Zn(2+).

It localises to the cytoplasm. The catalysed reaction is tRNA(Met) + L-methionine + ATP = L-methionyl-tRNA(Met) + AMP + diphosphate. In terms of biological role, is required not only for elongation of protein synthesis but also for the initiation of all mRNA translation through initiator tRNA(fMet) aminoacylation. This is Methionine--tRNA ligase (metG) from Nanoarchaeum equitans (strain Kin4-M).